Reading from the N-terminus, the 461-residue chain is Diaboline synthase (461 aa).

Active-site proton acceptor residues include H185 and D400.

It belongs to the plant acyltransferase family. As to quaternary structure, monomer.

The protein localises to the cytoplasm. It catalyses the reaction 17,18-epoxy-17-hydroxycur-19-ene + acetyl-CoA = diaboline + CoA. It participates in alkaloid biosynthesis. Acetyltransferase involved in the biosynthesis of curare monoterpene indole alkaloids (MIAs), natural products such as diaboline, a pharmacologically active compound used to regulate blood pressure. Curare alkaloids act as animal glycine receptor antagonists. Catalyzes the conversion of 17,18-epoxy-17-hydroxycur-19-ene (Wieland-Gumlich aldehyde) to diaboline. The chain is Diaboline synthase from Strychnos sp.